A 250-amino-acid chain; its full sequence is DNA repair protein RecO (250 aa).

The protein belongs to the RecO family.

Functionally, involved in DNA repair and RecF pathway recombination. The sequence is that of DNA repair protein RecO from Staphylococcus aureus (strain COL).